Here is a 184-residue protein sequence, read N- to C-terminus: ATP synthase subunit b, chloroplastic (184 aa).

The chain crosses the membrane as a helical span at residues 26-48 (ILATNLINLSVVLGVLIFFGKGV).

The protein belongs to the ATPase B chain family. F-type ATPases have 2 components, F(1) - the catalytic core - and F(0) - the membrane proton channel. F(1) has five subunits: alpha(3), beta(3), gamma(1), delta(1), epsilon(1). F(0) has four main subunits: a(1), b(1), b'(1) and c(10-14). The alpha and beta chains form an alternating ring which encloses part of the gamma chain. F(1) is attached to F(0) by a central stalk formed by the gamma and epsilon chains, while a peripheral stalk is formed by the delta, b and b' chains.

The protein localises to the plastid. It localises to the chloroplast thylakoid membrane. In terms of biological role, f(1)F(0) ATP synthase produces ATP from ADP in the presence of a proton or sodium gradient. F-type ATPases consist of two structural domains, F(1) containing the extramembraneous catalytic core and F(0) containing the membrane proton channel, linked together by a central stalk and a peripheral stalk. During catalysis, ATP synthesis in the catalytic domain of F(1) is coupled via a rotary mechanism of the central stalk subunits to proton translocation. Functionally, component of the F(0) channel, it forms part of the peripheral stalk, linking F(1) to F(0). This chain is ATP synthase subunit b, chloroplastic, found in Calycanthus floridus var. glaucus (Eastern sweetshrub).